Reading from the N-terminus, the 893-residue chain is cGMP-specific 3',5'-cyclic phosphodiesterase (893 aa).

2 consecutive GAF domains span residues 21 to 173 (DIDV…GIGI) and 205 to 390 (NLEC…GLGI). A PDEase domain is found at 420-743 (GQDQTEKLIQ…RNWQDLAEKV (324 aa)). The active-site Proton donor is the His-496. The a divalent metal cation site is built by His-500, His-536, Asp-537, and Asp-647. Disordered stretches follow at residues 784 to 807 (QQSQHGGDDSHTPEHQRSGSRLSI) and 844 to 893 (HVSE…CALL). Basic and acidic residues-rich tracts occupy residues 789 to 800 (GGDDSHTPEHQR) and 844 to 853 (HVSEDMDDKS). Residues 864-880 (SVGRMSASSSTSSAGTV) show a composition bias toward low complexity. The segment covering 883-893 (SKKRSKLCALL) has biased composition (basic residues). A Cysteine methyl ester modification is found at Cys-890. The S-farnesyl cysteine moiety is linked to residue Cys-890. A propeptide spans 891–893 (ALL) (removed in mature form).

Belongs to the cyclic nucleotide phosphodiesterase family. As to quaternary structure, interacts with PrBP. A divalent metal cation is required as a cofactor.

The protein resides in the cell membrane. The enzyme catalyses 3',5'-cyclic GMP + H2O = GMP + H(+). Its function is as follows. Has a role regulating cGMP transport in Malpighian tubule principal cells. The chain is cGMP-specific 3',5'-cyclic phosphodiesterase from Drosophila virilis (Fruit fly).